Consider the following 214-residue polypeptide: Ribonuclease HII (214 aa).

Positions 26 to 214 (EIVCGVDEAG…PVREAFDLIR (189 aa)) constitute an RNase H type-2 domain. Positions 32, 33, and 124 each coordinate a divalent metal cation.

The protein belongs to the RNase HII family. It depends on Mn(2+) as a cofactor. Mg(2+) is required as a cofactor.

It is found in the cytoplasm. It catalyses the reaction Endonucleolytic cleavage to 5'-phosphomonoester.. Endonuclease that specifically degrades the RNA of RNA-DNA hybrids. In Burkholderia thailandensis (strain ATCC 700388 / DSM 13276 / CCUG 48851 / CIP 106301 / E264), this protein is Ribonuclease HII.